Reading from the N-terminus, the 661-residue chain is Peroxisomal acyl-coenzyme A oxidase 1 (661 aa).

Residues Lys-89 and Lys-90 each carry the N6-succinyllysine modification. Thr-139 serves as a coordination point for FAD. Lys-159 carries the N6-succinyllysine modification. Position 178 (Gly-178) interacts with FAD. Residue Lys-216 is modified to N6-acetyllysine. Lys-241 is subject to N6-succinyllysine. Lys-255, Lys-267, and Lys-272 each carry N6-acetyllysine. At Lys-349 the chain carries N6-succinyllysine. Glu-421 serves as the catalytic Proton acceptor. N6-acetyllysine; alternate occurs at positions 437, 446, 512, and 637. An N6-succinyllysine; alternate mark is found at Lys-437, Lys-446, Lys-512, and Lys-637. Lys-643 carries the N6-succinyllysine modification. Ser-649 carries the post-translational modification Phosphoserine. Lys-652 bears the N6-acetyllysine mark. An N6-succinyllysine modification is found at Lys-655. Positions 659–661 (SKL) match the Microbody targeting signal motif.

This sequence belongs to the acyl-CoA oxidase family. In terms of assembly, homodimer. Interacts with LONP2. It depends on FAD as a cofactor.

Its subcellular location is the peroxisome. The catalysed reaction is a 2,3-saturated acyl-CoA + O2 = a (2E)-enoyl-CoA + H2O2. It catalyses the reaction hexadecanoyl-CoA + O2 = (2E)-hexadecenoyl-CoA + H2O2. The enzyme catalyses dodecanoyl-CoA + O2 = (2E)-dodecenoyl-CoA + H2O2. It carries out the reaction octanoyl-CoA + O2 = (2E)-octenoyl-CoA + H2O2. The catalysed reaction is decanoyl-CoA + O2 = (2E)-decenoyl-CoA + H2O2. It catalyses the reaction tetradecanoyl-CoA + O2 = (2E)-tetradecenoyl-CoA + H2O2. The enzyme catalyses hexadecanedioyl-CoA + O2 = (2E)-hexadecenedioyl-CoA + H2O2. It carries out the reaction tetracosanoyl-CoA + O2 = (2E)-tetracosenoyl-CoA + H2O2. The catalysed reaction is glutaryl-CoA + O2 = (2E)-glutaconyl-CoA + H2O2. It catalyses the reaction hexanoyl-CoA + O2 = (2E)-hexenoyl-CoA + H2O2. The enzyme catalyses octadecanoyl-CoA + O2 = (2E)-octadecenoyl-CoA + H2O2. It carries out the reaction (5Z,8Z,11Z,14Z,17Z)-eicosapentaenoyl-CoA + O2 = (2E,5Z,8Z,11Z,14Z,17Z)-icosahexaenoyl-CoA + H2O2. The catalysed reaction is (6Z,9Z,12Z,15Z,18Z,21Z)-tetracosahexaenoyl-CoA + O2 = (2E,6Z,9Z,12Z,15Z,18Z,21Z)-tetracosaheptaenoyl-CoA + H2O2. It participates in lipid metabolism; peroxisomal fatty acid beta-oxidation. Involved in the initial and rate-limiting step of peroxisomal beta-oxidation of straight-chain saturated and unsaturated very-long-chain fatty acids. Catalyzes the desaturation of fatty acyl-CoAs such as palmitoyl-CoA (hexadecanoyl-CoA) to 2-trans-enoyl-CoAs ((2E)-enoyl-CoAs) such as (2E)-hexadecenoyl-CoA, and donates electrons directly to molecular oxygen (O(2)), thereby producing hydrogen peroxide (H(2)O(2)). Isoform 2 shows higher activity with hexadecanoyl-CoA as substrate than isoform 1. This is Peroxisomal acyl-coenzyme A oxidase 1 (ACOX1) from Phascolarctos cinereus (Koala).